Reading from the N-terminus, the 559-residue chain is Subtelomeric hrmA-associated cluster protein AFUB_079030 (559 aa).

4 disordered regions span residues 163–190 (AKHPYNGGKPPAGAPPGKKGDPEKTKPE), 298–351 (RESN…TGMA), 427–451 (SITSSSPEQTSHHRQAPLPMQHSAS), and 525–559 (FRTGFLSHPCDPSQQAPHSSGCGHPDSWTQNRPHV). Over residues 169-179 (GGKPPAGAPPG) the composition is skewed to low complexity. Basic and acidic residues-rich tracts occupy residues 180 to 189 (KKGDPEKTKP) and 300 to 325 (SNQKEKDGDSNVDPDQKHEQEDDNAR). Polar residues predominate over residues 336 to 346 (NSTSPMSNSAE).

Functionally, part of the subtelomeric hrmA-associated cluster (HAC) containing genes that alter the hyphal surface (such as reduced total chitin or increased beta-glucan exposure) and perturb inter-hyphal interactions within the developing biofilms, resulting in a loss of vertically aligned polarized growing filaments. Consequently, this hypoxia-typic morphotype (called H-MORPH) with altered biofilm architecture leads to increased hypoxia fitness, increased host inflammation, rapid disease progression, and mortality in a murine model of invasive aspergillosis. This chain is Subtelomeric hrmA-associated cluster protein AFUB_079030, found in Aspergillus fumigatus (strain CBS 144.89 / FGSC A1163 / CEA10) (Neosartorya fumigata).